A 159-amino-acid polypeptide reads, in one-letter code: Cyclic pyranopterin monophosphate synthase (159 aa).

Substrate contacts are provided by residues 75 to 77 (MCH) and 113 to 114 (ME). Residue aspartate 128 is part of the active site.

The protein belongs to the MoaC family. As to quaternary structure, homohexamer; trimer of dimers.

It carries out the reaction (8S)-3',8-cyclo-7,8-dihydroguanosine 5'-triphosphate = cyclic pyranopterin phosphate + diphosphate. The protein operates within cofactor biosynthesis; molybdopterin biosynthesis. Catalyzes the conversion of (8S)-3',8-cyclo-7,8-dihydroguanosine 5'-triphosphate to cyclic pyranopterin monophosphate (cPMP). The chain is Cyclic pyranopterin monophosphate synthase from Desulfatibacillum aliphaticivorans.